The chain runs to 597 residues: MKKLINLISEEVTKAFVSAGYDEKYGKVTLSNRPDLCEFQCNGAMAAAKEYKCAPFMISDKVAALLESDEMFESVESVKPGFLNIKMDTAFLAKYMNDMKDDEGRYGLEKAKKPLTIVVDYGGPNVAKPLHVGHLRSAVIGESVKRIAKFMGHNVIGDVHLGDWGLQMGLIITELRERKPDLVYFDESYTGEYPKEAPFTISELEDIYPTASGKSKSDESFKEAALLATKELQGGRRGYQALLSHIMNVSVTDLKRNYENLNVHFELWKGESDAQPYVPGMVEMMKEKGFAHMSEGALVVDVKEDTDTKEIPPCIILKSDGASLYSTTDLATLVMRMKENNPDRVIYLADARQSMHFIQVFRCARKTGIVPDTTELVHIGFGTMNGKDGKPFKTRDGGVMRLEYLLKEIDDEMLNKIKENQKEKENLNIDEAEAEQTAKTVALAAVKYGDLSNQASKDYIFDIDRFTSFEGNTGPYILYTIVRIKSILSKYEAKGGDISALKDAIMPAVNAGQKNLMLSLAKFNATIESAYEESAPHKICAYIYELANAFNGFYHDTKILSEENEELKKSYISLLVLTKEILEACIDMLGFSAPDRM.

Positions 124–134 (PNVAKPLHVGH) match the 'HIGH' region motif.

Belongs to the class-I aminoacyl-tRNA synthetase family. Monomer.

The protein localises to the cytoplasm. It catalyses the reaction tRNA(Arg) + L-arginine + ATP = L-arginyl-tRNA(Arg) + AMP + diphosphate. The polypeptide is Arginine--tRNA ligase (Agathobacter rectalis (strain ATCC 33656 / DSM 3377 / JCM 17463 / KCTC 5835 / VPI 0990) (Eubacterium rectale)).